We begin with the raw amino-acid sequence, 444 residues long: Trigger factor (444 aa).

Residues 166–251 (GDQIVIDFKG…VKAVKAPKPA (86 aa)) enclose the PPIase FKBP-type domain.

It belongs to the FKBP-type PPIase family. Tig subfamily.

The protein localises to the cytoplasm. It carries out the reaction [protein]-peptidylproline (omega=180) = [protein]-peptidylproline (omega=0). In terms of biological role, involved in protein export. Acts as a chaperone by maintaining the newly synthesized protein in an open conformation. Functions as a peptidyl-prolyl cis-trans isomerase. This is Trigger factor from Cereibacter sphaeroides (strain ATCC 17025 / ATH 2.4.3) (Rhodobacter sphaeroides).